We begin with the raw amino-acid sequence, 331 residues long: MALQQGGDYYGTSNVVAQKFYRGQDNQRPAGCVLPSIDCLLHDKTTYSGNRDYNNENSKGFAEANGHEIFDPQGFKETVSICDRRALEAPPHQNYPVQNLNGMGGAFYNSDSNGQQFVQSYDNLPFGKIKISHASDQKSRPKPTKPRASRKRAAIAQSKKKRSGGDLTLDGLVQLLGEIVDPVKLQAEIDEQKSRQSTSQPDKEIVQSSQYSHNGFIQHASPQIYNYNYQGYTMVQAEAYQPQYQEHVQYTQYSQGPINQTNIQEVQSEDSEGIYEYFVDQPNYSNQGTNQGTCQGFIQINGNFQENVQIVSQDNVQGSSQGYIQEYYQYE.

2 disordered regions span residues 131-163 (ISHA…KKRS) and 190-209 (DEQK…VQSS). Residues 140–162 (RPKPTKPRASRKRAAIAQSKKKR) are compositionally biased toward basic residues. Residues 195–209 (RQSTSQPDKEIVQSS) show a composition bias toward polar residues.

This is an uncharacterized protein from Caenorhabditis elegans.